A 285-amino-acid polypeptide reads, in one-letter code: 4-diphosphocytidyl-2-C-methyl-D-erythritol kinase (285 aa).

Lys10 is a catalytic residue. Residue 92-102 (PFGAGLGGGSS) coordinates ATP. The active site involves Asp134.

The protein belongs to the GHMP kinase family. IspE subfamily.

It catalyses the reaction 4-CDP-2-C-methyl-D-erythritol + ATP = 4-CDP-2-C-methyl-D-erythritol 2-phosphate + ADP + H(+). It participates in isoprenoid biosynthesis; isopentenyl diphosphate biosynthesis via DXP pathway; isopentenyl diphosphate from 1-deoxy-D-xylulose 5-phosphate: step 3/6. Catalyzes the phosphorylation of the position 2 hydroxy group of 4-diphosphocytidyl-2C-methyl-D-erythritol. The chain is 4-diphosphocytidyl-2-C-methyl-D-erythritol kinase from Chloroherpeton thalassium (strain ATCC 35110 / GB-78).